A 362-amino-acid chain; its full sequence is Protein ABHD12B (362 aa).

It belongs to the serine esterase family.

This Homo sapiens (Human) protein is Protein ABHD12B.